An 84-amino-acid chain; its full sequence is Large ribosomal subunit protein bL27 (84 aa).

A disordered region spans residues 1-21 (MAHKKGGGSTKNGRDSNPKYL).

The protein belongs to the bacterial ribosomal protein bL27 family.

This Pelodictyon phaeoclathratiforme (strain DSM 5477 / BU-1) protein is Large ribosomal subunit protein bL27.